We begin with the raw amino-acid sequence, 136 residues long: Large ribosomal subunit protein uL14 (136 aa).

This sequence belongs to the universal ribosomal protein uL14 family.

This is Large ribosomal subunit protein uL14 (rpl23) from Dictyostelium discoideum (Social amoeba).